We begin with the raw amino-acid sequence, 80 residues long: Exodeoxyribonuclease 7 small subunit (80 aa).

The protein belongs to the XseB family. In terms of assembly, heterooligomer composed of large and small subunits.

The protein resides in the cytoplasm. The enzyme catalyses Exonucleolytic cleavage in either 5'- to 3'- or 3'- to 5'-direction to yield nucleoside 5'-phosphates.. Functionally, bidirectionally degrades single-stranded DNA into large acid-insoluble oligonucleotides, which are then degraded further into small acid-soluble oligonucleotides. In Rickettsia typhi (strain ATCC VR-144 / Wilmington), this protein is Exodeoxyribonuclease 7 small subunit.